Consider the following 406-residue polypeptide: Cysteine desulfurase IscS (406 aa).

Pyridoxal 5'-phosphate is bound by residues 75–76 (AT), N155, Q183, and 203–205 (SSH). K206 bears the N6-(pyridoxal phosphate)lysine mark. T243 serves as a coordination point for pyridoxal 5'-phosphate. Residue C330 is the Cysteine persulfide intermediate of the active site. A [2Fe-2S] cluster-binding site is contributed by C330.

It belongs to the class-V pyridoxal-phosphate-dependent aminotransferase family. NifS/IscS subfamily. Homodimer. Forms a heterotetramer with IscU, interacts with other sulfur acceptors. It depends on pyridoxal 5'-phosphate as a cofactor.

The protein resides in the cytoplasm. It catalyses the reaction (sulfur carrier)-H + L-cysteine = (sulfur carrier)-SH + L-alanine. Its pathway is cofactor biosynthesis; iron-sulfur cluster biosynthesis. Its function is as follows. Master enzyme that delivers sulfur to a number of partners involved in Fe-S cluster assembly, tRNA modification or cofactor biosynthesis. Catalyzes the removal of elemental sulfur atoms from cysteine to produce alanine. Functions as a sulfur delivery protein for Fe-S cluster synthesis onto IscU, an Fe-S scaffold assembly protein, as well as other S acceptor proteins. This chain is Cysteine desulfurase IscS, found in Haemophilus ducreyi (strain 35000HP / ATCC 700724).